A 432-amino-acid polypeptide reads, in one-letter code: Ciliated left-right organizer protein containing ZP-N domains homolog (432 aa).

Expressed specifically by cells of the ciliated left-right organizer.

The sequence is that of Ciliated left-right organizer protein containing ZP-N domains homolog (ciroz) from Danio rerio (Zebrafish).